The following is a 180-amino-acid chain: Crossover junction endodeoxyribonuclease RuvC (180 aa).

Residues Asp7, Glu66, and Asp138 contribute to the active site. 3 residues coordinate Mg(2+): Asp7, Glu66, and Asp138.

This sequence belongs to the RuvC family. Homodimer which binds Holliday junction (HJ) DNA. The HJ becomes 2-fold symmetrical on binding to RuvC with unstacked arms; it has a different conformation from HJ DNA in complex with RuvA. In the full resolvosome a probable DNA-RuvA(4)-RuvB(12)-RuvC(2) complex forms which resolves the HJ. Requires Mg(2+) as cofactor.

It is found in the cytoplasm. The catalysed reaction is Endonucleolytic cleavage at a junction such as a reciprocal single-stranded crossover between two homologous DNA duplexes (Holliday junction).. The RuvA-RuvB-RuvC complex processes Holliday junction (HJ) DNA during genetic recombination and DNA repair. Endonuclease that resolves HJ intermediates. Cleaves cruciform DNA by making single-stranded nicks across the HJ at symmetrical positions within the homologous arms, yielding a 5'-phosphate and a 3'-hydroxyl group; requires a central core of homology in the junction. The consensus cleavage sequence is 5'-(A/T)TT(C/G)-3'. Cleavage occurs on the 3'-side of the TT dinucleotide at the point of strand exchange. HJ branch migration catalyzed by RuvA-RuvB allows RuvC to scan DNA until it finds its consensus sequence, where it cleaves and resolves the cruciform DNA. The sequence is that of Crossover junction endodeoxyribonuclease RuvC from Paraburkholderia xenovorans (strain LB400).